The following is a 781-amino-acid chain: Isoquinoline 1-oxidoreductase subunit beta (781 aa).

In terms of assembly, heterodimer of an alpha chain and a beta chain.

The catalysed reaction is isoquinoline + A + H2O = isoquinolin-1(2H)-one + AH2. Functionally, specific towards N-containing N-heterocyclic substrates, including isoquinoline, isoquinolin-5-ol, phthalazine and quinazoline. The protein is Isoquinoline 1-oxidoreductase subunit beta (iorB) of Brevundimonas diminuta (Pseudomonas diminuta).